Reading from the N-terminus, the 1866-residue chain is Protein strawberry notch homolog (1866 aa).

Low complexity predominate over residues 19-28 (QQSSPTPSTS). 5 disordered regions span residues 19–63 (QQSS…HSSS), 132–151 (TAPT…IVPK), 156–253 (LFET…GLPI), 561–581 (GMAS…QKAK), and 1112–1308 (GLSG…ARGS). Composition is skewed to polar residues over residues 37-63 (QSFS…HSSS) and 134-146 (PTVN…TPTV). Residues 161 to 176 (TADSPTPSGDTSTTAS) show a composition bias toward low complexity. Composition is skewed to polar residues over residues 191–203 (DRQN…TARS) and 210–228 (TPST…LTQR). A compositionally biased stretch (low complexity) spans 229 to 239 (SHTSSPASSAS). The segment covering 566–577 (RLQTTPQPLTKS) has biased composition (polar residues). Residues 1112–1126 (GLSGIGRSSMSSSTG) show a composition bias toward low complexity. Acidic residues predominate over residues 1142 to 1152 (DGSDDEVENDM). Over residues 1164–1177 (ESAREEAEGARTLE) the composition is skewed to basic and acidic residues. Residues 1194-1213 (SSSDDSDEEVVKDEDEDEEA) show a composition bias toward acidic residues. 2 stretches are compositionally biased toward basic and acidic residues: residues 1262–1281 (RDEE…EERR) and 1290–1304 (RRAE…EELQ).

It belongs to the SBNO family. Expressed in the somatic gonad, neurons, hypodermal cells, seam cells, the excretory system, and intestinal cells (at protein level).

It localises to the nucleus. Its function is as follows. Transcriptional activator that functions upstream of the let-60/Ras and let-23/EGFR signaling pathways to positively regulate lin-3 expression and thereby promote vulval induction. Plays a role in excretory duct development. Plays a role in male tail development. This chain is Protein strawberry notch homolog, found in Caenorhabditis elegans.